A 186-amino-acid polypeptide reads, in one-letter code: Large ribosomal subunit protein uL5m (186 aa).

This sequence belongs to the universal ribosomal protein uL5 family.

The protein resides in the mitochondrion. This chain is Large ribosomal subunit protein uL5m (RPL5), found in Solanum tuberosum (Potato).